We begin with the raw amino-acid sequence, 378 residues long: Lipoyl synthase, mitochondrial (378 aa).

Residues Cys97, Cys102, Cys108, Cys128, Cys132, Cys135, and Ser343 each coordinate [4Fe-4S] cluster. In terms of domain architecture, Radical SAM core spans 111-332 (GSDKSAATAT…RQRALDMGFL (222 aa)).

This sequence belongs to the radical SAM superfamily. Lipoyl synthase family. [4Fe-4S] cluster serves as cofactor.

It is found in the mitochondrion. The catalysed reaction is [[Fe-S] cluster scaffold protein carrying a second [4Fe-4S](2+) cluster] + N(6)-octanoyl-L-lysyl-[protein] + 2 oxidized [2Fe-2S]-[ferredoxin] + 2 S-adenosyl-L-methionine + 4 H(+) = [[Fe-S] cluster scaffold protein] + N(6)-[(R)-dihydrolipoyl]-L-lysyl-[protein] + 4 Fe(3+) + 2 hydrogen sulfide + 2 5'-deoxyadenosine + 2 L-methionine + 2 reduced [2Fe-2S]-[ferredoxin]. It participates in protein modification; protein lipoylation via endogenous pathway; protein N(6)-(lipoyl)lysine from octanoyl-[acyl-carrier-protein]: step 2/2. Its function is as follows. Catalyzes the radical-mediated insertion of two sulfur atoms into the C-6 and C-8 positions of the octanoyl moiety bound to the lipoyl domains of lipoate-dependent enzymes, thereby converting the octanoylated domains into lipoylated derivatives. This is Lipoyl synthase, mitochondrial from Phaeosphaeria nodorum (strain SN15 / ATCC MYA-4574 / FGSC 10173) (Glume blotch fungus).